The following is a 303-amino-acid chain: uncharacterized protein (303 aa).

Positions 173–300 (KLPELLGQLN…RFTVNGWIRK (128 aa)) constitute a Fe2OG dioxygenase domain.

The cofactor is Fe(2+). L-ascorbate is required as a cofactor.

This is an uncharacterized protein from Synechocystis sp. (strain ATCC 27184 / PCC 6803 / Kazusa).